Consider the following 303-residue polypeptide: Glycine--tRNA ligase alpha subunit (303 aa).

This sequence belongs to the class-II aminoacyl-tRNA synthetase family. As to quaternary structure, tetramer of two alpha and two beta subunits.

Its subcellular location is the cytoplasm. The enzyme catalyses tRNA(Gly) + glycine + ATP = glycyl-tRNA(Gly) + AMP + diphosphate. The protein is Glycine--tRNA ligase alpha subunit of Enterobacter sp. (strain 638).